The primary structure comprises 226 residues: MKDLFLFSSLLDASHTFSYFFHIGLVALIAVIVAMMATRSMQLVPRGMQNLGEAFLEGVLSMGRDTMGSEKGARKYLPLVATLGIIVFFSNIIGIIPGFHSPTASLNLTLSLAIIVFVYYHFEGIRAQGFVKYFAHFMGPIKLLAPLMFPIEIVSHLSRVVSLSFRLFGNIKGDDLFLMVILALVPYIAPLPAYVLLTFMAFLQAFIFMILTYVYLAGATVVEEGH.

6 helical membrane passes run 17–37 (FSYF…AMMA), 79–99 (LVAT…IPGF), 105–125 (SLNL…FEGI), 134–154 (FAHF…IEIV), 176–196 (LFLM…AYVL), and 199–219 (FMAF…LAGA).

It belongs to the ATPase A chain family. As to quaternary structure, F-type ATPases have 2 components, CF(1) - the catalytic core - and CF(0) - the membrane proton channel. CF(1) has five subunits: alpha(3), beta(3), gamma(1), delta(1), epsilon(1). CF(0) has three main subunits: a(1), b(2) and c(9-12). The alpha and beta chains form an alternating ring which encloses part of the gamma chain. CF(1) is attached to CF(0) by a central stalk formed by the gamma and epsilon chains, while a peripheral stalk is formed by the delta and b chains.

It localises to the cell inner membrane. Key component of the proton channel; it plays a direct role in the translocation of protons across the membrane. This Campylobacter jejuni subsp. jejuni serotype O:23/36 (strain 81-176) protein is ATP synthase subunit a.